A 1340-amino-acid chain; its full sequence is Protein SHORT ROOT IN SALT MEDIUM 1 (1340 aa).

6 disordered regions span residues 1 to 73 (MHRD…RSHL), 161 to 185 (YGEQSSSYLGRELQNEPTRRYADPS), 357 to 473 (EEER…IRRS), 723 to 750 (TVEVTKDAEKKSPGDTSGTPTTGTKKTV), 784 to 990 (PETT…PPRA), and 1063 to 1269 (RNQR…KREE). The segment covering 7 to 39 (SSRGTGYGQQQYGSQSGYSQNLGSGYPGSSVSG) has biased composition (low complexity). Residues 46-60 (QISLSSRHPSITGAP) show a composition bias toward polar residues. Composition is skewed to basic and acidic residues over residues 173–182 (LQNEPTRRYA), 357–470 (EEER…EASI), and 723–735 (TVEVTKDAEKKSP). The stretch at 355 to 426 (LREEERRRED…RERKRALEIK (72 aa)) forms a coiled coil. Over residues 810–824 (GDTSDPSAKANEQTP) the composition is skewed to polar residues. Basic residues predominate over residues 828–840 (IVKKKIIKRVAKR). Composition is skewed to basic and acidic residues over residues 841–872 (KVAEIDNKMDGDSKKDGDSDEKKVMEVGKKSS), 887–988 (EDVK…EEPP), 1069–1097 (HQEELSVKQNEAKSQDKRQKTAEHEDKEA), and 1105–1138 (PGKDDKETSGKETVDGSREIADKEAVAKTKETLG). Positions 1052-1086 (LKKLRVKIVRQRNQRKRHQEELSVKQNEAKSQDKR) form a coiled coil. Positions 1153-1204 (ENQDEEDDDGDDDPEEDPEEDPEEDPEEDPEEDPEECEEMDVANTEQEEPAE) are enriched in acidic residues. Basic and acidic residues-rich tracts occupy residues 1205-1214 (EPQKKEENLE) and 1229-1257 (TDNRKEERGPNDSKTEIKPKSETEKHGKQ). The 36-residue stretch at 1270 to 1305 (TVDKELLQAFRFFDRNQAGYVRVEDMRVTIHSLGKF) folds into the EF-hand domain.

Interacts with BHLH148/RITF1. Expressed ubiquitously at high levels, including in guard cells.

It localises to the nucleus. Functionally, required for salt tolerance and sodium (Na) homeostasis after salt stress. Together with BHLH148/RITF1, regulates the transcription of several genes involved in the detoxification of reactive oxygen species (ROS) generated by salt (NaCl) stress. Binds calcium. This is Protein SHORT ROOT IN SALT MEDIUM 1 from Arabidopsis thaliana (Mouse-ear cress).